The primary structure comprises 220 residues: NADH-quinone oxidoreductase subunit I (220 aa).

2 4Fe-4S ferredoxin-type domains span residues 71–102 and 112–141; these read LQRLLDSGSERCIGCGLCEKICTSNCIRIITH and DSYTINLGRCIYCGLCAEVCPELAIVMGNR. Residues Cys82, Cys85, Cys88, Cys92, Cys121, Cys124, Cys127, and Cys131 each coordinate [4Fe-4S] cluster. The tract at residues 187-220 is disordered; the sequence is MQATPLDYVQEPSKEESQEETPTNPESNKGDENV.

This sequence belongs to the complex I 23 kDa subunit family. NDH-1 is composed of 14 different subunits. Subunits NuoA, H, J, K, L, M, N constitute the membrane sector of the complex. The cofactor is [4Fe-4S] cluster.

The protein resides in the cell inner membrane. The enzyme catalyses a quinone + NADH + 5 H(+)(in) = a quinol + NAD(+) + 4 H(+)(out). Its function is as follows. NDH-1 shuttles electrons from NADH, via FMN and iron-sulfur (Fe-S) centers, to quinones in the respiratory chain. The immediate electron acceptor for the enzyme in this species is believed to be ubiquinone. Couples the redox reaction to proton translocation (for every two electrons transferred, four hydrogen ions are translocated across the cytoplasmic membrane), and thus conserves the redox energy in a proton gradient. The sequence is that of NADH-quinone oxidoreductase subunit I from Helicobacter pylori (strain ATCC 700392 / 26695) (Campylobacter pylori).